The primary structure comprises 186 residues: Peptidyl-tRNA hydrolase (186 aa).

Position 14 (Tyr-14) interacts with tRNA. His-19 functions as the Proton acceptor in the catalytic mechanism. Residues Tyr-64, Asn-66, and Asn-113 each coordinate tRNA.

The protein belongs to the PTH family. In terms of assembly, monomer.

Its subcellular location is the cytoplasm. The enzyme catalyses an N-acyl-L-alpha-aminoacyl-tRNA + H2O = an N-acyl-L-amino acid + a tRNA + H(+). Functionally, hydrolyzes ribosome-free peptidyl-tRNAs (with 1 or more amino acids incorporated), which drop off the ribosome during protein synthesis, or as a result of ribosome stalling. In terms of biological role, catalyzes the release of premature peptidyl moieties from peptidyl-tRNA molecules trapped in stalled 50S ribosomal subunits, and thus maintains levels of free tRNAs and 50S ribosomes. The polypeptide is Peptidyl-tRNA hydrolase (Agathobacter rectalis (strain ATCC 33656 / DSM 3377 / JCM 17463 / KCTC 5835 / VPI 0990) (Eubacterium rectale)).